Consider the following 356-residue polypeptide: Phosphoribosyl pyrophosphate synthase-associated protein 1 (356 aa).

M1 carries the post-translational modification N-acetylmethionine. 2 positions are modified to phosphoserine: S177 and S215.

It belongs to the ribose-phosphate pyrophosphokinase family. As to quaternary structure, binds to PRPS1 and PRPS2.

Functionally, seems to play a negative regulatory role in 5-phosphoribose 1-diphosphate synthesis. This is Phosphoribosyl pyrophosphate synthase-associated protein 1 (Prpsap1) from Mus musculus (Mouse).